A 274-amino-acid polypeptide reads, in one-letter code: 16S rRNA (guanine(1405)-N(7))-methyltransferase (274 aa).

S-adenosyl-L-methionine contacts are provided by residues F64, 102–104 (HMS), R108, A133, D156, 182–183 (DL), L198, and Q207.

This sequence belongs to the methyltransferase superfamily. Aminoglycoside resistance family.

It catalyses the reaction guanosine(1405) in 16S rRNA + S-adenosyl-L-methionine = N(7)-methylguanosine(1405) in 16S rRNA + S-adenosyl-L-homocysteine. Its function is as follows. Specifically methylates the N(7) position of guanine 1405 in 16S rRNA. Confers resistance to aminoglycosides. The chain is 16S rRNA (guanine(1405)-N(7))-methyltransferase (grm) from Micromonospora rosea.